The chain runs to 67 residues: Bombesin (67 aa).

Positions 1–30 are cleaved as a signal peptide; sequence MLLLSAVKTLLLAWLGIVLVFMSIIKSAML. The propeptide occupies 31 to 49; sequence DFLQEAGKLEGIETYKKEA. Glutamine 50 is subject to Pyrrolidone carboxylic acid. A Methionine amide modification is found at methionine 64.

In terms of tissue distribution, expressed by the skin glands.

The protein localises to the secreted. In terms of biological role, stimulates smooth muscle contraction in isolated rat stomach strip. This is Bombesin from Rana shuchinae (Sichuan frog).